A 188-amino-acid chain; its full sequence is dCTP deaminase (188 aa).

DCTP is bound by residues Lys111–Arg116, Thr135–Glu137, Gln156, Tyr170, Lys179, and Gln180. Glu137 (proton donor/acceptor) is an active-site residue.

The protein belongs to the dCTP deaminase family. In terms of assembly, homotrimer.

The enzyme catalyses dCTP + H2O + H(+) = dUTP + NH4(+). It participates in pyrimidine metabolism; dUMP biosynthesis; dUMP from dCTP (dUTP route): step 1/2. Its function is as follows. Catalyzes the deamination of dCTP to dUTP. This Rickettsia bellii (strain OSU 85-389) protein is dCTP deaminase.